We begin with the raw amino-acid sequence, 224 residues long: Oocyte zinc finger protein XlCOF6.1 (224 aa).

8 consecutive C2H2-type zinc fingers follow at residues 6-28, 34-56, 62-84, 90-112, 118-140, 146-168, 174-196, and 202-224; these read FSCSVCGKCFALKTELTIHCRSH, FHCTECGKYFQHRSNLRRHQRYH, FTCFECGTCFVNYSWLMLHIRMH, FSCSECGKRFARRSVLEAHQKIH, FSCSECGKGFIKQCDLARHYRTH, FPCPECGKCFTQSMQLIRHRRTH, FACSECGKCFAQNSHLTQHRLGH, and FSCSECGKCFSRRSHLIAHLKSH.

The protein belongs to the krueppel C2H2-type zinc-finger protein family.

The protein localises to the nucleus. Its function is as follows. May be involved in transcriptional regulation. The chain is Oocyte zinc finger protein XlCOF6.1 from Xenopus laevis (African clawed frog).